We begin with the raw amino-acid sequence, 567 residues long: Protein ESMERALDA 1 (567 aa).

The segment at 1–41 (MLAKNRLPGSGHTTPSPPASPRRSPRYRHGRSKAAAGSRFP) is disordered. The Cytoplasmic portion of the chain corresponds to 1 to 65 (MLAKNRLPGS…ILLSVLLRRQ (65 aa)). Residues 23–32 (RSPRYRHGRS) show a composition bias toward basic residues. A helical; Signal-anchor for type II membrane protein membrane pass occupies residues 66–86 (GIFLFAPLIYISCMLLYMGTV). Residues 87–567 (SFDVVPIIQR…TPESRPPPAT (481 aa)) lie on the Lumenal side of the membrane. Asn-121, Asn-145, Asn-184, and Asn-238 each carry an N-linked (GlcNAc...) asparagine glycan. Substrate is bound at residue 331–333 (HLR). N-linked (GlcNAc...) asparagine glycosylation is found at Asn-403, Asn-419, Asn-449, Asn-538, and Asn-554.

The protein belongs to the glycosyltransferase GT106 family. In terms of tissue distribution, ubiquitous.

It is found in the golgi apparatus membrane. It participates in protein modification; protein glycosylation. Functionally, glycosyltransferase that plays a role in cell adhesion. This Arabidopsis thaliana (Mouse-ear cress) protein is Protein ESMERALDA 1.